Reading from the N-terminus, the 328-residue chain is Arabinose 5-phosphate isomerase KdsD (328 aa).

Residues 42–184 (CEKMFWCKGK…AVALLKARGF (143 aa)) enclose the SIS domain. Residues 75–76 (GT), H82, H88, 114–123 (ALIPVLKRLH), 148–150 (KVA), T222, and D275 contribute to the substrate site. A Zn(2+)-binding site is contributed by H82. Residues 210–268 (MHTGDEIPHVKKTASLRDALLEVTRKNLGMTVICDDNMMIEGIFTDGDLRRVFDMGVDV) enclose the CBS 1 domain. Residues 277 to 328 (MTPGGIRVRPGILAVEALNLMQSRHITSVMVADGDHLLGVLHMHDLLRAGVV) form the CBS 2 domain.

Belongs to the SIS family. GutQ/KpsF subfamily. As to quaternary structure, homotetramer.

It carries out the reaction D-arabinose 5-phosphate = D-ribulose 5-phosphate. Its pathway is carbohydrate biosynthesis; 3-deoxy-D-manno-octulosonate biosynthesis; 3-deoxy-D-manno-octulosonate from D-ribulose 5-phosphate: step 1/3. It participates in bacterial outer membrane biogenesis; lipopolysaccharide biosynthesis. Its function is as follows. Involved in the biosynthesis of 3-deoxy-D-manno-octulosonate (KDO), a unique 8-carbon sugar component of lipopolysaccharides (LPSs). Catalyzes the reversible aldol-ketol isomerization between D-ribulose 5-phosphate (Ru5P) and D-arabinose 5-phosphate (A5P). The protein is Arabinose 5-phosphate isomerase KdsD (kdsD) of Escherichia coli O6:H1 (strain CFT073 / ATCC 700928 / UPEC).